A 526-amino-acid polypeptide reads, in one-letter code: Dual specificity tyrosine-phosphorylation-regulated kinase 2 (526 aa).

Polar residues-rich tracts occupy residues T30–G40 and G60–G70. The interval T30–A76 is disordered. Phosphothreonine; by ATM is present on T31. The short motif at K114–R116 is the Nuclear localization signal element. The Protein kinase domain maps to Y147–L460. ATP-binding positions include I153–V161, K176, and F226–L229. The active-site Proton acceptor is D273. Y307 is subject to Phosphotyrosine. At S367 the chain carries Phosphoserine; by ATM. Positions R462 to S499 are disordered. The segment covering E480–S499 has biased composition (polar residues).

The protein belongs to the protein kinase superfamily. CMGC Ser/Thr protein kinase family. MNB/DYRK subfamily. Interacts with MDM2. Mg(2+) is required as a cofactor. Mn(2+) serves as cofactor. Phosphorylated on serine/threonine residues. Phosphorylation on Thr-31 and Ser-367 by ATM in response to genotoxic stress disrupts MDM2 binding and prevents MDM2-mediated ubiquitination and subsequent proteasome degradation, thus promoting p53/TP53-mediated apoptosis. In terms of processing, ubiquitination in nucleus by MDM2 in normal conditions leads to proteasome degradation.

Its subcellular location is the cytoplasm. It is found in the nucleus. The enzyme catalyses L-seryl-[protein] + ATP = O-phospho-L-seryl-[protein] + ADP + H(+). It carries out the reaction L-threonyl-[protein] + ATP = O-phospho-L-threonyl-[protein] + ADP + H(+). The catalysed reaction is L-tyrosyl-[protein] + ATP = O-phospho-L-tyrosyl-[protein] + ADP + H(+). With respect to regulation, autophosphorylates on tyrosine residues. Its function is as follows. Serine/threonine-protein kinase involved in the control of mitotic transition and the regulation of cellular growth and/or development. The polypeptide is Dual specificity tyrosine-phosphorylation-regulated kinase 2 (Gallus gallus (Chicken)).